The primary structure comprises 338 residues: Methionine import ATP-binding protein MetN 2 (338 aa).

The 241-residue stretch at I2 to V242 folds into the ABC transporter domain. G39–S46 serves as a coordination point for ATP.

It belongs to the ABC transporter superfamily. Methionine importer (TC 3.A.1.24) family. The complex is composed of two ATP-binding proteins (MetN), two transmembrane proteins (MetI) and a solute-binding protein (MetQ).

It is found in the cell inner membrane. The catalysed reaction is L-methionine(out) + ATP + H2O = L-methionine(in) + ADP + phosphate + H(+). The enzyme catalyses D-methionine(out) + ATP + H2O = D-methionine(in) + ADP + phosphate + H(+). Functionally, part of the ABC transporter complex MetNIQ involved in methionine import. Responsible for energy coupling to the transport system. The chain is Methionine import ATP-binding protein MetN 2 from Salmonella typhi.